A 96-amino-acid polypeptide reads, in one-letter code: MLKTQTLEQTKLSEPKMYKVILLNDDVTTMDFVIEILMNIFHQNLEKASQTMLEIHHNGSGICGIYTQEIALSKQKKVIDAAKLANFPLQAKVEEE.

The protein belongs to the ClpS family. As to quaternary structure, binds to the N-terminal domain of the chaperone ClpA.

In terms of biological role, involved in the modulation of the specificity of the ClpAP-mediated ATP-dependent protein degradation. This Campylobacter jejuni subsp. doylei (strain ATCC BAA-1458 / RM4099 / 269.97) protein is ATP-dependent Clp protease adapter protein ClpS.